The sequence spans 401 residues: Imidazolonepropionase (401 aa).

The Fe(3+) site is built by His66 and His68. Zn(2+) contacts are provided by His66 and His68. 4-imidazolone-5-propanoate contacts are provided by Arg75, Tyr138, and His171. Residue Tyr138 coordinates N-formimidoyl-L-glutamate. A Fe(3+)-binding site is contributed by His236. A Zn(2+)-binding site is contributed by His236. Residue Gln239 coordinates 4-imidazolone-5-propanoate. Asp311 contributes to the Fe(3+) binding site. Zn(2+) is bound at residue Asp311. N-formimidoyl-L-glutamate is bound by residues Asn313 and Gly315. Thr316 serves as a coordination point for 4-imidazolone-5-propanoate.

Belongs to the metallo-dependent hydrolases superfamily. HutI family. Requires Zn(2+) as cofactor. It depends on Fe(3+) as a cofactor.

The protein localises to the cytoplasm. The enzyme catalyses 4-imidazolone-5-propanoate + H2O = N-formimidoyl-L-glutamate. It participates in amino-acid degradation; L-histidine degradation into L-glutamate; N-formimidoyl-L-glutamate from L-histidine: step 3/3. In terms of biological role, catalyzes the hydrolytic cleavage of the carbon-nitrogen bond in imidazolone-5-propanoate to yield N-formimidoyl-L-glutamate. It is the third step in the universal histidine degradation pathway. The protein is Imidazolonepropionase of Pseudomonas entomophila (strain L48).